Consider the following 152-residue polypeptide: Methylglyoxal synthase (152 aa).

The region spanning 6–152 (RTLATEKNIA…YEGYLKERLK (147 aa)) is the MGS-like domain. Substrate contacts are provided by residues H19, K23, 45–48 (TGTT), and 65–66 (SG). D71 acts as the Proton donor/acceptor in catalysis. Residue H98 participates in substrate binding.

This sequence belongs to the methylglyoxal synthase family.

The enzyme catalyses dihydroxyacetone phosphate = methylglyoxal + phosphate. Catalyzes the formation of methylglyoxal from dihydroxyacetone phosphate. The chain is Methylglyoxal synthase from Proteus mirabilis (strain HI4320).